The primary structure comprises 360 residues: Ferredoxin--NADP reductase (360 aa).

Residues threonine 25, glutamate 44, glutamine 52, tyrosine 57, valine 97, phenylalanine 132, aspartate 298, and serine 339 each contribute to the FAD site.

The protein belongs to the ferredoxin--NADP reductase type 2 family. Homodimer. The cofactor is FAD.

It catalyses the reaction 2 reduced [2Fe-2S]-[ferredoxin] + NADP(+) + H(+) = 2 oxidized [2Fe-2S]-[ferredoxin] + NADPH. The sequence is that of Ferredoxin--NADP reductase from Chlorobaculum tepidum (strain ATCC 49652 / DSM 12025 / NBRC 103806 / TLS) (Chlorobium tepidum).